We begin with the raw amino-acid sequence, 468 residues long: Immunoglobulin superfamily member 21 (468 aa).

The first 24 residues, 1–24 (MQAAPSLRRASCLLLAAILDLARG), serve as a signal peptide directing secretion. Residues 25–132 (YLTVNIEPLP…RATREKVVLA (108 aa)) form the Ig-like 1 domain. A disulfide bridge connects residues cysteine 46 and cysteine 116. 3 N-linked (GlcNAc...) asparagine glycosylation sites follow: asparagine 82, asparagine 165, and asparagine 407. The region spanning 344-429 (PKIMMTPSRA…GSTDTHTRLI (86 aa)) is the Ig-like 2 domain.

As to quaternary structure, interacts (Ig-like 1 domain) with NRXN2 (via Laminin G-like 1 domain) in a trans-interaction manner. As to expression, expressed in brain (at protein levels). Highly expressed in the pyramidal cell layer of the dorsal and ventral hippocampal CA1 and CA3 regions, layers 5 and 6 of the cortex, the thalamus and the pons and weakly expressed in the cerebellum. Expressed in neurons but not in glia.

The protein localises to the postsynaptic cell membrane. In terms of biological role, involved in synaptic inhibition in the brain. Selectively regulates inhibitory presynaptic differentiation through interacting with presynaptic NRXN2. In Mus musculus (Mouse), this protein is Immunoglobulin superfamily member 21 (Igsf21).